The sequence spans 546 residues: Chaperonin GroEL (546 aa).

Residues 30-33, Lys51, 87-91, Gly415, and Asp495 contribute to the ATP site; these read TLGP and DGTTT.

The protein belongs to the chaperonin (HSP60) family. In terms of assembly, forms a cylinder of 14 subunits composed of two heptameric rings stacked back-to-back. Interacts with the co-chaperonin GroES.

The protein localises to the cytoplasm. It carries out the reaction ATP + H2O + a folded polypeptide = ADP + phosphate + an unfolded polypeptide.. Its function is as follows. Together with its co-chaperonin GroES, plays an essential role in assisting protein folding. The GroEL-GroES system forms a nano-cage that allows encapsulation of the non-native substrate proteins and provides a physical environment optimized to promote and accelerate protein folding. This is Chaperonin GroEL from Brucella melitensis biotype 1 (strain ATCC 23456 / CCUG 17765 / NCTC 10094 / 16M).